The chain runs to 115 residues: NADH-ubiquinone oxidoreductase chain 3 (115 aa).

The next 3 membrane-spanning stretches (helical) occupy residues 3 to 23 (LMAT…IAFW), 55 to 75 (FFLV…LLPL), and 86 to 106 (LTLL…AYEW).

Belongs to the complex I subunit 3 family. In terms of assembly, core subunit of respiratory chain NADH dehydrogenase (Complex I) which is composed of 45 different subunits. Interacts with TMEM186. Interacts with TMEM242.

It is found in the mitochondrion inner membrane. It carries out the reaction a ubiquinone + NADH + 5 H(+)(in) = a ubiquinol + NAD(+) + 4 H(+)(out). In terms of biological role, core subunit of the mitochondrial membrane respiratory chain NADH dehydrogenase (Complex I) which catalyzes electron transfer from NADH through the respiratory chain, using ubiquinone as an electron acceptor. Essential for the catalytic activity of complex I. In Mammuthus primigenius (Siberian woolly mammoth), this protein is NADH-ubiquinone oxidoreductase chain 3.